The sequence spans 131 residues: Small ribosomal subunit protein bS6 (131 aa).

Residues 98–131 (EASPMVKAKDERRERREDFANETSEETEAGDSEE) form a disordered region. Positions 104 to 116 (KAKDERRERREDF) are enriched in basic and acidic residues. Residues 120–131 (TSEETEAGDSEE) are compositionally biased toward acidic residues.

The protein belongs to the bacterial ribosomal protein bS6 family.

Functionally, binds together with bS18 to 16S ribosomal RNA. The polypeptide is Small ribosomal subunit protein bS6 (Edwardsiella ictaluri (strain 93-146)).